The primary structure comprises 160 residues: MNFNHFDESGNAVMVDVSHKQPTLRTAVAAARVGMSPELLAAIREGGMAKGDVLGVARLAGIMAAKKTPDLIPLSHPLAIHSVAVDYELDSGAGTIQVRCTVRALERTGVEMEAMTGASLAALTIYDMCKGSDKSITIGDIRLLYKEGGKSGVYRREEGQ.

Substrate contacts are provided by residues 74–76 (LSH) and 112–113 (ME). Asp-127 is an active-site residue.

Belongs to the MoaC family. In terms of assembly, homohexamer; trimer of dimers.

The enzyme catalyses (8S)-3',8-cyclo-7,8-dihydroguanosine 5'-triphosphate = cyclic pyranopterin phosphate + diphosphate. It participates in cofactor biosynthesis; molybdopterin biosynthesis. Catalyzes the conversion of (8S)-3',8-cyclo-7,8-dihydroguanosine 5'-triphosphate to cyclic pyranopterin monophosphate (cPMP). This chain is Cyclic pyranopterin monophosphate synthase, found in Pelobacter propionicus (strain DSM 2379 / NBRC 103807 / OttBd1).